Here is a 255-residue protein sequence, read N- to C-terminus: uncharacterized protein (255 aa).

Residues 1-10 (MSDSIHRRKV) show a composition bias toward basic residues. The segment at 1–78 (MSDSIHRRKV…SPMRGLPMEE (78 aa)) is disordered. The span at 44–61 (VFERSFSEPSLNRHRDGQ) shows a compositional bias: basic and acidic residues.

This is an uncharacterized protein from Arabidopsis thaliana (Mouse-ear cress).